The sequence spans 595 residues: Ketol-acid reductoisomerase, chloroplastic (595 aa).

The transit peptide at 1 to 72 directs the protein to the chloroplast; sequence MAATAATTFS…GGGSALSAQM (72 aa). The region spanning 108–306 is the KARI N-terminal Rossmann domain; that stretch reads VRGGRNLFPL…ALGSPFTFAT (199 aa). Residues 129-136, 162-167, and 201-205 each bind NADP(+); these read GVIGWGSQ, RKGSNS, and SDSAQ. H226 is an active-site residue. 2 KARI C-terminal knotted domains span residues 307-455 and 456-592; these read TLEQ…RPAG and DLGP…RPEL. Positions 315, 319, 492, and 496 each coordinate Mg(2+). S518 provides a ligand contact to substrate.

It belongs to the ketol-acid reductoisomerase family. Homodimer. Mg(2+) is required as a cofactor.

It is found in the plastid. The protein resides in the chloroplast. The catalysed reaction is (2R)-2,3-dihydroxy-3-methylbutanoate + NADP(+) = (2S)-2-acetolactate + NADPH + H(+). The enzyme catalyses (2R,3R)-2,3-dihydroxy-3-methylpentanoate + NADP(+) = (S)-2-ethyl-2-hydroxy-3-oxobutanoate + NADPH + H(+). Its pathway is amino-acid biosynthesis; L-isoleucine biosynthesis; L-isoleucine from 2-oxobutanoate: step 2/4. The protein operates within amino-acid biosynthesis; L-valine biosynthesis; L-valine from pyruvate: step 2/4. This Spinacia oleracea (Spinach) protein is Ketol-acid reductoisomerase, chloroplastic (AHRI).